The sequence spans 259 residues: DNA-directed RNA polymerase 30 kDa polypeptide (259 aa).

A TFIIS-type zinc finger spans residues tyrosine 155–lysine 195. Residues cysteine 159, cysteine 162, cysteine 187, and cysteine 190 each coordinate Zn(2+). Residues glutamate 214–glutamate 259 form a disordered region. A compositionally biased stretch (pro residues) spans asparagine 226–alanine 236.

It belongs to the poxviridae DNA-directed RNA polymerase 30 kDa subunit family. The DNA-dependent RNA polymerase (vRNAP) consists of eight subunits encoded by early viral genes and termed according to their apparent molecular masses Rpo147, Rpo132, Rpo35, Rpo30, Rpo22, Rpo19, Rpo18, and Rpo7. The same holoenzyme, with the addition of the transcription-specificity factor RAP94, is used for early gene expression.

It is found in the virion. The protein resides in the host cytoplasm. The enzyme catalyses RNA(n) + a ribonucleoside 5'-triphosphate = RNA(n+1) + diphosphate. Part of the DNA-dependent RNA polymerase which catalyzes the transcription of viral DNA into RNA using the four ribonucleoside triphosphates as substrates. Responsible for the transcription of early, intermediate and late genes. DNA-dependent RNA polymerase associates with the early transcription factor (ETF), itself composed of OPG118/D6 and OPG134/A8, thereby allowing the early genes transcription. Late transcription, and probably also intermediate transcription, require newly synthesized RNA polymerase. In Homo sapiens (Human), this protein is DNA-directed RNA polymerase 30 kDa polypeptide (OPG066).